Here is a 143-residue protein sequence, read N- to C-terminus: Transcriptional regulator MraZ (143 aa).

SpoVT-AbrB domains lie at 5-47 (THSP…PIRE) and 76-119 (ASNE…DAQT).

Belongs to the MraZ family. Forms oligomers.

It is found in the cytoplasm. It localises to the nucleoid. The chain is Transcriptional regulator MraZ from Thermobifida fusca (strain YX).